Consider the following 351-residue polypeptide: Major capsid protein (351 aa).

It belongs to the baculoviridae p39 family.

The protein localises to the virion. This Orgyia pseudotsugata (Douglas-fir tussock moth) protein is Major capsid protein (P39).